We begin with the raw amino-acid sequence, 117 residues long: Large ribosomal subunit protein bL17 (117 aa).

This sequence belongs to the bacterial ribosomal protein bL17 family. In terms of assembly, part of the 50S ribosomal subunit. Contacts protein L32.

The chain is Large ribosomal subunit protein bL17 from Campylobacter jejuni subsp. doylei (strain ATCC BAA-1458 / RM4099 / 269.97).